A 1309-amino-acid chain; its full sequence is Mediator of RNA polymerase II transcription subunit 33A (1309 aa).

The interval 809-829 (QTLNPVNSGTSSSSGAASEDS) is disordered. Residues 816–826 (SGTSSSSGAAS) show a composition bias toward low complexity.

Belongs to the Mediator complex subunit 33 family. Component of the Mediator complex.

Its subcellular location is the nucleus. In terms of biological role, component of the Mediator complex, a coactivator involved in the regulated transcription of nearly all RNA polymerase II-dependent genes. Mediator functions as a bridge to convey information from gene-specific regulatory proteins to the basal RNA polymerase II transcription machinery. The Mediator complex, having a compact conformation in its free form, is recruited to promoters by direct interactions with regulatory proteins and serves for the assembly of a functional preinitiation complex with RNA polymerase II and the general transcription factors. Involved in the repression of phenylpropanoid biosynthesis. May compete with MED33B for common binding partners or for occupancy in Mediator. This chain is Mediator of RNA polymerase II transcription subunit 33A (MED33A), found in Arabidopsis thaliana (Mouse-ear cress).